A 250-amino-acid chain; its full sequence is L-ascorbate peroxidase 1, cytosolic (250 aa).

H42 (proton acceptor) is an active-site residue. The tract at residues 113 to 137 (VPFHPGREDKPAPPPEGRLPDATKG) is disordered. H163 is a binding site for heme b. K(+) contacts are provided by T164, T180, N182, and D187.

It belongs to the peroxidase family. Ascorbate peroxidase subfamily. Requires heme b as cofactor.

It localises to the cytoplasm. The catalysed reaction is L-ascorbate + H2O2 = L-dehydroascorbate + 2 H2O. Its function is as follows. Plays a key role in hydrogen peroxide removal. The protein is L-ascorbate peroxidase 1, cytosolic (APX1) of Oryza sativa subsp. indica (Rice).